The chain runs to 128 residues: Putative protein SEM1, isoform 2 (128 aa).

Basic residues predominate over residues 22–32; the sequence is KHGIKRGRRPS. The tract at residues 22–42 is disordered; that stretch reads KHGIKRGRRPSIRSPAQRARG.

This Homo sapiens (Human) protein is Putative protein SEM1, isoform 2.